A 1375-amino-acid chain; its full sequence is BNI1-related protein 1 (1375 aa).

The GBD/FH3 domain maps to cysteine 94–threonine 490. A coiled-coil region spans residues glutamine 520–glutamine 601. Serine 621 is subject to Phosphoserine. The FH1 domain maps to serine 659 to proline 851. The disordered stretch occupies residues tyrosine 661–phenylalanine 684. Serine 751 is subject to Phosphoserine. 3 disordered regions span residues lysine 764–leucine 785, alanine 817–asparagine 839, and lysine 1285–valine 1309. Pro residues-rich tracts occupy residues glutamine 767 to proline 781 and valine 818 to proline 828. An FH2 domain is found at aspartate 868–methionine 1290. The DAD domain occupies aspartate 1302–serine 1336.

It belongs to the formin homology family. BNI1 subfamily. In terms of assembly, interacts with profilin at the FH1 domain.

May organize microtubules by mediating spindle positioning and movement in the budding process. Potential target of the RHO family members. The polypeptide is BNI1-related protein 1 (BNR1) (Saccharomyces cerevisiae (strain ATCC 204508 / S288c) (Baker's yeast)).